The sequence spans 316 residues: ATP synthase gamma chain (316 aa).

This sequence belongs to the ATPase gamma chain family. As to quaternary structure, F-type ATPases have 2 components, CF(1) - the catalytic core - and CF(0) - the membrane proton channel. CF(1) has five subunits: alpha(3), beta(3), gamma(1), delta(1), epsilon(1). CF(0) has three main subunits: a, b and c.

The protein resides in the cellular thylakoid membrane. Its function is as follows. Produces ATP from ADP in the presence of a proton gradient across the membrane. The gamma chain is believed to be important in regulating ATPase activity and the flow of protons through the CF(0) complex. The chain is ATP synthase gamma chain from Prochlorococcus marinus (strain MIT 9303).